We begin with the raw amino-acid sequence, 552 residues long: Steroid transmembrane transporter SLC22A24 (552 aa).

The next 12 helical transmembrane spans lie at 16–36 (FQIL…PHML), 144–164 (LISV…LIFG), 178–198 (CCLL…TFPV), 204–224 (FLGG…MSEW), 235–255 (GIIL…GFVI), 267–287 (IPLF…QWLI), 350–370 (IFYL…LMLN), 378–398 (IFLF…AVLL), 407–427 (ISQM…IFLS), 435–455 (VALA…HTVH), 469–489 (IGLN…LMIL), and 496–516 (LPWI…LLLP). The interval 524-552 (PNTIQDVENNRRDSRKTKQEDISMKVTQF) is disordered. Basic and acidic residues predominate over residues 531–546 (ENNRRDSRKTKQEDIS).

This sequence belongs to the major facilitator (TC 2.A.1) superfamily. Organic cation transporter (TC 2.A.1.19) family.

The protein localises to the cell membrane. It carries out the reaction estrone 3-sulfate(out) + glutarate(in) = estrone 3-sulfate(in) + glutarate(out). The enzyme catalyses 17beta-estradiol 17-O-(beta-D-glucuronate)(out) + glutarate(in) = 17beta-estradiol 17-O-(beta-D-glucuronate)(in) + glutarate(out). The catalysed reaction is taurocholate(out) + glutarate(in) = taurocholate(in) + glutarate(out). It catalyses the reaction glycocholate(out) + glutarate(in) = glycocholate(in) + glutarate(out). It carries out the reaction dehydroepiandrosterone 3-sulfate(out) + glutarate(in) = dehydroepiandrosterone 3-sulfate(in) + glutarate(out). The enzyme catalyses glutarate(in) + succinate(out) = glutarate(out) + succinate(in). In terms of biological role, renal transmembrane organic anion/dicarboxylate exchanger that participates in the reabsorption of conjugated steroids, as well as bile acids, driven by an outward gradient of dicarboxylates such as glutarate or succinate. Transports taurocholate, estrone 3-sulfate, and estradiol-17-glucuronide (17beta-estradiol 17-O-(beta-D-glucuronate)), but not androstanediol glucuronide (5alpha-androstane-3alpha,17beta-diol 3-O-(beta-D-glucuronate)). This is Steroid transmembrane transporter SLC22A24 from Equus caballus (Horse).